A 347-amino-acid chain; its full sequence is MPTPLTLADFDYHLPPELIAQSPAAERGGSRLLHLDAASRLHDRRFPDLAGLLRPHDLLVFNDTRVIKARLTGQKATGGKVEVLVERITAPDRALAHVRASKSPGPGMRLRLAEAFEAEVLGREGELFDLRFPAPVLDLLDAHGATPLPPYITHAADATDERRYQTVYAREPGAVAAPTAGLHFDQPMLEQLAAQGVQRAFVTLHVGAGTFQPVRVQNLAEHIMHAEWYTVPEATVAAIARARAHGGRIVAVGTTSVRALESAAAQAQDGPLAAAQGDTRLFITPGYRYRIVDALLTNFHLPQSTLLMLVSALAGVAPIRRAYAHAVAERYRFFSYGDAMFIETPAP.

It belongs to the QueA family. Monomer.

It localises to the cytoplasm. The enzyme catalyses 7-aminomethyl-7-carbaguanosine(34) in tRNA + S-adenosyl-L-methionine = epoxyqueuosine(34) in tRNA + adenine + L-methionine + 2 H(+). It participates in tRNA modification; tRNA-queuosine biosynthesis. Transfers and isomerizes the ribose moiety from AdoMet to the 7-aminomethyl group of 7-deazaguanine (preQ1-tRNA) to give epoxyqueuosine (oQ-tRNA). The sequence is that of S-adenosylmethionine:tRNA ribosyltransferase-isomerase from Bordetella parapertussis (strain 12822 / ATCC BAA-587 / NCTC 13253).